Here is a 378-residue protein sequence, read N- to C-terminus: Chorismate synthase (378 aa).

The interval 42 to 61 is disordered; sequence IQAELDRRRPGQSPITTPRQ. Arg49 lines the NADP(+) pocket. Residues 126–128, Gly287, 302–306, and Arg328 each bind FMN; these read RAS and KPTAT.

The protein belongs to the chorismate synthase family. In terms of assembly, homotetramer. Requires FMNH2 as cofactor.

It catalyses the reaction 5-O-(1-carboxyvinyl)-3-phosphoshikimate = chorismate + phosphate. It participates in metabolic intermediate biosynthesis; chorismate biosynthesis; chorismate from D-erythrose 4-phosphate and phosphoenolpyruvate: step 7/7. Catalyzes the anti-1,4-elimination of the C-3 phosphate and the C-6 proR hydrogen from 5-enolpyruvylshikimate-3-phosphate (EPSP) to yield chorismate, which is the branch point compound that serves as the starting substrate for the three terminal pathways of aromatic amino acid biosynthesis. This reaction introduces a second double bond into the aromatic ring system. This Synechococcus sp. (strain JA-2-3B'a(2-13)) (Cyanobacteria bacterium Yellowstone B-Prime) protein is Chorismate synthase.